The following is a 567-amino-acid chain: DNA ligase (567 aa).

Glutamate 246 contributes to the ATP binding site. Lysine 248 acts as the N6-AMP-lysine intermediate in catalysis. Positions 253, 268, 298, 339, 415, and 421 each coordinate ATP.

Belongs to the ATP-dependent DNA ligase family. It depends on Mg(2+) as a cofactor.

It carries out the reaction ATP + (deoxyribonucleotide)n-3'-hydroxyl + 5'-phospho-(deoxyribonucleotide)m = (deoxyribonucleotide)n+m + AMP + diphosphate.. Its function is as follows. DNA ligase that seals nicks in double-stranded DNA during DNA replication, DNA recombination and DNA repair. The chain is DNA ligase from Nanoarchaeum equitans (strain Kin4-M).